We begin with the raw amino-acid sequence, 984 residues long: MRAPARGTGCCGRSGGRWLAGAAQPRCLWAGGAGQRFMVPGGTMKSLKKDSRLRITPTRLLEASENVKEKKRAKGPEQPTPTIQEEPEPVSNVLQGDDILALAIKKEDLKEQHIPRLTEKEDKRVITQKFIIRKLKPMDPRRKVCHLVARPANPDEATKPLDYSGPGDSFDGSDQILPHHILGSLQDFKRIALARGNTQLAERIPTSPCLMTLISAEGESKQKAPKEEKRPPWAPPPQHNFLKNWQRNTALRKKQQEALSEHLKKPVSELLMHTGETYRRIQEERELIDCTLPTRRDRKSWENSGFWSRLEYLGDEMTGLVMTKTKTQRGLMEPITHIRKPHSIRVETGLPAQRDASYRYTWDRSLFLIYRRKELQRIMEELDFSQQDIDGLEVVGKGWPFSAVTVEDYTVFERSQGSSSEDTAYLGTLASSSDVSMPILGPSLLFCGKPACWIRGSNPQDKRQVGIAAHLTFETLEGEKTSSELTVVNNGTVAIWYDWRRQHQPDTFQDLKKNRMQRFYFDNREGVILPGEIKTFTFFFKSLTAGVFREFWEFRTHPTLLGGAILQVNLHAVSLTQDVFEDERKVLESKLTAHEAVTVVREVLQELLMGVLTPERTPSPVDAYLTEEDLFRHRNPPLHYEHQVVQSLHQLWRQYMTLPAKAEEARPGDKEHVSPIATEKASVNAELLPRFRSPISETQVPRPENEALRESGSQKARVGTKSPQRKSIMEEILVEESPDVDSTKSPWEPDGLPLLEWNLCLEDFRKAVMVLPDENHREDALMRLNKAALELCQKPRPLQSNLLHQMCLQLWRDVIDSLVGHSMWLRSVLGLPEKETIYLNVPEEQDQKSPPIMEVKVPVGKAGKEERKGAAQEKKQLGIKDKEDKKGAKLLGKEDRPNSKKHKAKDDKKVIKSASQDRFSLEDPTPDIILSSQEPIDPLVMGKYTQSLHSEVRGLLDTLVTDLMVLADELSPIKNVEEALRLCR.

Disordered stretches follow at residues 61-88 (LEAS…EEPE) and 218-240 (GESK…PQHN). The segment covering 218 to 231 (GESKQKAPKEEKRP) has biased composition (basic and acidic residues). Thr613 carries the phosphothreonine modification. Ser619 bears the Phosphoserine mark. Disordered regions lie at residues 693–729 (SPIS…KSIM) and 842–917 (PEEQ…ASQD). The segment covering 862–910 (AGKEERKGAAQEKKQLGIKDKEDKKGAKLLGKEDRPNSKKHKAKDDKKV) has biased composition (basic and acidic residues).

Interacts with MYCBP. Expressed specifically in testis.

It is found in the cytoplasm. The protein resides in the membrane. May play a role in spermatogenesis. May be involved in synaptic processes. The chain is MYCBP-associated protein from Homo sapiens (Human).